A 48-amino-acid polypeptide reads, in one-letter code: Small ribosomal subunit protein uS14 (48 aa).

The Zn(2+) site is built by cysteine 13, cysteine 16, cysteine 31, and cysteine 34.

It belongs to the universal ribosomal protein uS14 family. Zinc-binding uS14 subfamily. In terms of assembly, part of the 30S ribosomal subunit. Requires Zn(2+) as cofactor.

Its function is as follows. Binds 16S rRNA, required for the assembly of 30S particles. The protein is Small ribosomal subunit protein uS14 of Methanopyrus kandleri (strain AV19 / DSM 6324 / JCM 9639 / NBRC 100938).